Here is a 446-residue protein sequence, read N- to C-terminus: Phosphoglucosamine mutase (446 aa).

The active-site Phosphoserine intermediate is the Ser-101. Mg(2+) contacts are provided by Ser-101, Asp-240, Asp-242, and Asp-244. A Phosphoserine modification is found at Ser-101.

It belongs to the phosphohexose mutase family. It depends on Mg(2+) as a cofactor. In terms of processing, activated by phosphorylation.

It carries out the reaction alpha-D-glucosamine 1-phosphate = D-glucosamine 6-phosphate. Functionally, catalyzes the conversion of glucosamine-6-phosphate to glucosamine-1-phosphate. This chain is Phosphoglucosamine mutase, found in Pseudomonas entomophila (strain L48).